The primary structure comprises 502 residues: NAD(P)H-quinone oxidoreductase subunit 2, chloroplastic (502 aa).

14 helical membrane-spanning segments follow: residues 15–35 (VLPE…DLIF), 42–62 (VLPY…LFQW), 79–99 (LSIA…LLSI), 108–128 (TLSE…LLCG), 132–152 (ILMI…LTGY), 167–187 (LLIG…LYGL), 210–230 (LASL…IAAA), 253–275 (VSSK…PYII), 278–298 (WHNI…IIAI), 307–327 (LGYS…AGNI), 334–354 (LVYM…VILF), 375–395 (ILAL…PFGG), 413–433 (LLVF…IKII), and 468–488 (ILIC…IISI).

This sequence belongs to the complex I subunit 2 family. In terms of assembly, NDH is composed of at least 16 different subunits, 5 of which are encoded in the nucleus.

It is found in the plastid. Its subcellular location is the chloroplast thylakoid membrane. The enzyme catalyses a plastoquinone + NADH + (n+1) H(+)(in) = a plastoquinol + NAD(+) + n H(+)(out). The catalysed reaction is a plastoquinone + NADPH + (n+1) H(+)(in) = a plastoquinol + NADP(+) + n H(+)(out). Functionally, NDH shuttles electrons from NAD(P)H:plastoquinone, via FMN and iron-sulfur (Fe-S) centers, to quinones in the photosynthetic chain and possibly in a chloroplast respiratory chain. The immediate electron acceptor for the enzyme in this species is believed to be plastoquinone. Couples the redox reaction to proton translocation, and thus conserves the redox energy in a proton gradient. In Mesostigma viride (Green alga), this protein is NAD(P)H-quinone oxidoreductase subunit 2, chloroplastic.